The primary structure comprises 267 residues: Putative hydro-lyase Arth_3576 (267 aa).

This sequence belongs to the D-glutamate cyclase family.

This chain is Putative hydro-lyase Arth_3576, found in Arthrobacter sp. (strain FB24).